Here is a 251-residue protein sequence, read N- to C-terminus: MTKTMSNKESLEKLIFALDMGGGLDDVMSWVRRLAGHVGVFKVGKEAFTRFGPQLVQSIQETGSRVFLDLKFHDIPNTVARAAEGAVELGVAMFNVHALGGMSMMTETVESVKKMAGRRELPMPLILGVTVLTSLNDEDLQRLGFTCTTGELVLRLARMAQDAGLSGVVASAQDVEAIRAACGKDFVIVTPGIRGLARVAGDDQKRVLTAEEAVRRGSDYLVIGRPIRTAEDPVAAADDFCREIARGLSAR.

Substrate-binding positions include Asp19, Lys42, 69–78, Thr133, Arg194, Gln204, Gly224, and Arg225; that span reads DLKFHDIPNT. Lys71 (proton donor) is an active-site residue.

The protein belongs to the OMP decarboxylase family. Type 1 subfamily. In terms of assembly, homodimer.

The enzyme catalyses orotidine 5'-phosphate + H(+) = UMP + CO2. Its pathway is pyrimidine metabolism; UMP biosynthesis via de novo pathway; UMP from orotate: step 2/2. Catalyzes the decarboxylation of orotidine 5'-monophosphate (OMP) to uridine 5'-monophosphate (UMP). This chain is Orotidine 5'-phosphate decarboxylase, found in Syntrophus aciditrophicus (strain SB).